The sequence spans 93 residues: NADH-dependent phenylglyoxylate dehydrogenase subunit delta (93 aa).

4Fe-4S ferredoxin-type domains are found at residues 39 to 68 (MRPV…EHAA) and 66 to 93 (HAAW…RRSR).

Dimer of heteropentamers composed of an alpha (PadG), a beta (PadI), a gamma (PadE), a delta (PadF) and an epsilon (PadH) subunit. The cofactor is [4Fe-4S] cluster.

The catalysed reaction is phenylglyoxylate + NAD(+) + CoA = benzoyl-CoA + CO2 + NADH. Its activity is regulated as follows. Activated by magnesium ions and thiamine diphosphate. In terms of biological role, involved in the anaerobic metabolism of phenylalanine and phenylacetate. Catalyzes the oxidative decarboxylation of phenylglyoxylate to benzoyl-CoA and CO(2). It can also react slowly with 2-oxo-3-methylbutanoate and use different electron acceptors such as benzyl viologen, methyl viologen, FAD or FMN, but NAD seems to be the physiological electron acceptor. Also catalyzes an isotope exchange between CO(2) and the carboxyl group which proves partial or complete reversibility of the oxidative decarboxylation reaction. This Aromatoleum evansii (Azoarcus evansii) protein is NADH-dependent phenylglyoxylate dehydrogenase subunit delta (padF).